Consider the following 479-residue polypeptide: UDP-N-acetylmuramate--L-alanine ligase (479 aa).

128–134 serves as a coordination point for ATP; the sequence is GAHGKTT.

Belongs to the MurCDEF family.

The protein resides in the cytoplasm. It catalyses the reaction UDP-N-acetyl-alpha-D-muramate + L-alanine + ATP = UDP-N-acetyl-alpha-D-muramoyl-L-alanine + ADP + phosphate + H(+). It functions in the pathway cell wall biogenesis; peptidoglycan biosynthesis. Functionally, cell wall formation. This chain is UDP-N-acetylmuramate--L-alanine ligase, found in Psychrobacter cryohalolentis (strain ATCC BAA-1226 / DSM 17306 / VKM B-2378 / K5).